Consider the following 297-residue polypeptide: Homoserine kinase (297 aa).

82 to 92 (PLTRGLGSSAS) contacts ATP.

This sequence belongs to the GHMP kinase family. Homoserine kinase subfamily.

The protein localises to the cytoplasm. It catalyses the reaction L-homoserine + ATP = O-phospho-L-homoserine + ADP + H(+). It participates in amino-acid biosynthesis; L-threonine biosynthesis; L-threonine from L-aspartate: step 4/5. Catalyzes the ATP-dependent phosphorylation of L-homoserine to L-homoserine phosphate. The polypeptide is Homoserine kinase (Bacillus mycoides (strain KBAB4) (Bacillus weihenstephanensis)).